Here is a 312-residue protein sequence, read N- to C-terminus: MSYASEVKKELTGITVHEKNARAELMALIRMNGSIGLANHAMILNVQTESPAIARRIYSLIKQLYKVESDILVRKKMKLKKNNTYVVRLRHHVQEILGDLAILDGFQIKERVPLDLLTDDLMIRSYLRGAFLAGGSVNNPETSRYHLEIYSLYEEHNEMIAEMINRYDLNARTTNRRSGYIVYLKEAEKIANFLQLIGATTSMLEFENIRIVRDMRNSVNRLVNCENANMDKVANAANRQVENIMLIEATVGLSSLPEKLRAIAETRLAHQEVSLKELGTLVPGGPISKSGVNHRLRKLNAYADELRQGKAI.

Residues 274–308 (SLKELGTLVPGGPISKSGVNHRLRKLNAYADELRQ) constitute a DNA-binding region (H-T-H motif).

This sequence belongs to the WhiA family.

Functionally, involved in cell division and chromosome segregation. This chain is Probable cell division protein WhiA, found in Limosilactobacillus fermentum (strain NBRC 3956 / LMG 18251) (Lactobacillus fermentum).